We begin with the raw amino-acid sequence, 173 residues long: Cell division protein SepF (173 aa).

A disordered region spans residues 17–85; it reads SDDEYISDET…NELRTITTVH (69 aa). Positions 35–52 are enriched in low complexity; that stretch reads SAGGSSAAVSESGSTSVA.

Belongs to the SepF family. In terms of assembly, homodimer. Interacts with FtsZ.

It localises to the cytoplasm. Cell division protein that is part of the divisome complex and is recruited early to the Z-ring. Probably stimulates Z-ring formation, perhaps through the cross-linking of FtsZ protofilaments. Its function overlaps with FtsA. The polypeptide is Cell division protein SepF (Kocuria rhizophila (strain ATCC 9341 / DSM 348 / NBRC 103217 / DC2201)).